The following is a 435-amino-acid chain: UPF0053 protein Rv2366c (435 aa).

The CNNM transmembrane domain occupies 1–185 (MTGYYQLLGS…QQRGVVAADE (185 aa)). Transmembrane regions (helical) follow at residues 7 to 27 (LLGS…DAAI) and 89 to 109 (VWGL…VVGV). CBS domains are found at residues 204–267 (MVPR…GRET) and 272–329 (VMRP…IADE).

This sequence belongs to the UPF0053 family.

The protein localises to the cell membrane. In Mycobacterium tuberculosis (strain ATCC 25618 / H37Rv), this protein is UPF0053 protein Rv2366c.